A 322-amino-acid polypeptide reads, in one-letter code: Short-chain dehydrogenase TIC 32, chloroplastic (322 aa).

Residues Gly36–Gly42, Asp88–Leu89, Asn115, and Thr136 contribute to the NADP(+) site. Residue Ser170 coordinates substrate. Catalysis depends on Tyr192, which acts as the Proton acceptor. An interaction with calmodulin region spans residues Asp298 to Asp314.

This sequence belongs to the short-chain dehydrogenases/reductases (SDR) family. As to quaternary structure, part of the Tic complex. Interacts with TIC110. Expressed in leaves and roots.

It localises to the plastid. It is found in the chloroplast inner membrane. Functionally, involved in protein precursor import into chloroplasts. Part of the redox regulon consisting of TIC32, TIC 55 and TIC62. This is Short-chain dehydrogenase TIC 32, chloroplastic from Arabidopsis thaliana (Mouse-ear cress).